A 276-amino-acid polypeptide reads, in one-letter code: Non-homologous end joining protein Ku (276 aa).

Residues 11-177 (ISFGLVHIPI…PEEIRSMEPL (167 aa)) form the Ku domain. Positions 256-276 (QVKTQQKKEAAPKKERRRKTS) are disordered.

Belongs to the prokaryotic Ku family. As to quaternary structure, homodimer. Interacts with LigD.

Functionally, with LigD forms a non-homologous end joining (NHEJ) DNA repair enzyme, which repairs dsDNA breaks with reduced fidelity. Binds linear dsDNA with 5'- and 3'- overhangs but not closed circular dsDNA nor ssDNA. Recruits and stimulates the ligase activity of LigD. The chain is Non-homologous end joining protein Ku from Heliobacterium modesticaldum (strain ATCC 51547 / Ice1).